We begin with the raw amino-acid sequence, 447 residues long: Interferon-induced protein 44-like (447 aa).

One can recognise a TLDc domain in the interval methionine 1–aspartate 159.

It belongs to the IFI44 family. In terms of assembly, HA-28 antigen forms a complex with Kb MHC in BALB.B donor cells. Interacts with FKBP5; this interaction modulates IKBKB and IKBKE kinase activities. In terms of tissue distribution, expressed on cells of the hematopoietic lineage. Detected in transformed cell lines of the macrophage and B-cell lineage. Expressed in spleen and bone marrow.

The protein resides in the cytoplasm. Type I interferon-stimulated gene (ISG) that plays a critical role in antiviral and antibacterial activity. During bacterial infection, promotes macrophage differentiation and facilitates inflammatory cytokine secretion. Plays a role in the control of respiratory syncycial virus/RSV infection, reducing the ability of the virus to replicate. Acts as a feedback regulator of IFN responses by negatively regulating IKBKB kinase activity through interaction with FKBP5. Its function is as follows. Precursor of the histocompatibility antigen HA-28 in BALB.B mice. More generally, minor histocompatibility antigens refer to immunogenic peptide which, when complexed with MHC, can generate an immune response after recognition by specific T-cells. The peptides are derived from polymorphic intracellular proteins, which are cleaved by normal pathways of antigen processing. The binding of these peptides to MHC molecules and its expression on the cell surface can stimulate T-cell responses and thereby trigger graft rejection or graft-versus-host disease (GVHD). More specifically, HA-28 minor antigen is transcribed in the BALB.B donor but not in host C57BL/6 cells. HA-28 is presented to the donor BALB.B cell surface by Kb MHC. This complex HA-28/Kb MHC elicits cytotoxic T-cell response in C57BL/6 mice immunized with BALB.B spleen cells. It induces C57BL/6 mice cells recognition and lysis by CD8 T-cell from BALB.B mice. This chain is Interferon-induced protein 44-like (Ifi44l), found in Mus musculus (Mouse).